The primary structure comprises 317 residues: Aspartate carbamoyltransferase catalytic subunit (317 aa).

Residues R66 and T67 each contribute to the carbamoyl phosphate site. K94 contacts L-aspartate. R116, H144, and Q147 together coordinate carbamoyl phosphate. Positions 177 and 231 each coordinate L-aspartate. The carbamoyl phosphate site is built by G272 and P273.

This sequence belongs to the aspartate/ornithine carbamoyltransferase superfamily. ATCase family. Heterododecamer (2C3:3R2) of six catalytic PyrB chains organized as two trimers (C3), and six regulatory PyrI chains organized as three dimers (R2).

It carries out the reaction carbamoyl phosphate + L-aspartate = N-carbamoyl-L-aspartate + phosphate + H(+). The protein operates within pyrimidine metabolism; UMP biosynthesis via de novo pathway; (S)-dihydroorotate from bicarbonate: step 2/3. Catalyzes the condensation of carbamoyl phosphate and aspartate to form carbamoyl aspartate and inorganic phosphate, the committed step in the de novo pyrimidine nucleotide biosynthesis pathway. The polypeptide is Aspartate carbamoyltransferase catalytic subunit (Bradyrhizobium sp. (strain BTAi1 / ATCC BAA-1182)).